Reading from the N-terminus, the 769-residue chain is DNA gyrase subunit B (769 aa).

Positions 414 to 528 (SEIYLVEGDS…NGHIYLAQPP (115 aa)) constitute a Toprim domain. Mg(2+) contacts are provided by Glu-420, Asp-493, and Asp-495.

It belongs to the type II topoisomerase GyrB family. In terms of assembly, heterotetramer, composed of two GyrA and two GyrB chains. In the heterotetramer, GyrA contains the active site tyrosine that forms a transient covalent intermediate with DNA, while GyrB binds cofactors and catalyzes ATP hydrolysis. Mg(2+) serves as cofactor. Mn(2+) is required as a cofactor. It depends on Ca(2+) as a cofactor.

It is found in the cytoplasm. It carries out the reaction ATP-dependent breakage, passage and rejoining of double-stranded DNA.. Functionally, a type II topoisomerase that negatively supercoils closed circular double-stranded (ds) DNA in an ATP-dependent manner to modulate DNA topology and maintain chromosomes in an underwound state. Negative supercoiling favors strand separation, and DNA replication, transcription, recombination and repair, all of which involve strand separation. Also able to catalyze the interconversion of other topological isomers of dsDNA rings, including catenanes and knotted rings. Type II topoisomerases break and join 2 DNA strands simultaneously in an ATP-dependent manner. The sequence is that of DNA gyrase subunit B from Campylobacter jejuni subsp. jejuni serotype O:2 (strain ATCC 700819 / NCTC 11168).